The primary structure comprises 589 residues: Enhancer of polycomb-like protein 1 (589 aa).

Disordered stretches follow at residues 298 to 339 (GDED…RPAE), 403 to 430 (MTPP…PNPP), 468 to 497 (LPSP…DAPV), and 516 to 589 (LQTV…QPVS). Residues 474-487 (DLSEEQSDRWKYDQ) show a composition bias toward basic and acidic residues. The segment covering 557 to 566 (PQPNQSQSLP) has biased composition (low complexity). The span at 567–589 (LPQPQQPVAQPQPQPQPQAQPVS) shows a compositional bias: pro residues.

It belongs to the enhancer of polycomb family. In terms of assembly, component of the NuA4 histone acetyltransferase complex.

It localises to the nucleus. In terms of biological role, component of the NuA4 histone acetyltransferase complex which is involved in transcriptional activation of selected genes principally by acetylation of nucleosomal histone H4 and H2A. The NuA4 complex is also involved in DNA repair. Involved in gene silencing by neighboring heterochromatin, blockage of the silencing spreading along the chromosome, and required for cell cycle progression through G2/M. This is Enhancer of polycomb-like protein 1 (epl-1) from Neurospora crassa (strain ATCC 24698 / 74-OR23-1A / CBS 708.71 / DSM 1257 / FGSC 987).